We begin with the raw amino-acid sequence, 121 residues long: Neuromedin-B (121 aa).

The first 24 residues, 1–24 (MTRQAGSSWLLRGLLLFALFASGV), serve as a signal peptide directing secretion. Residue Met-56 is modified to Methionine amide. The propeptide occupies 60-121 (SLEPPSLSLV…RRLLEPLLQK (62 aa)).

The protein belongs to the bombesin/neuromedin-B/ranatensin family. As to expression, in the hindbrain, expressed in the medulla surrounding the lateral half of the facial nucleus. Also expressed in the olfactory bulb and hippocampus. Detected in a subset of neurons distributed throughout the retrotrapezoid nucleus/parafacial respiratory group (RTN/pFRG). Within the RTN/pFRG, expressed in neuronal subpopulations distinct from those expressing Grp. Expressed in lung.

It is found in the secreted. It localises to the cell projection. The protein resides in the neuron projection. Its function is as follows. Stimulates smooth muscle contraction. Induces sighing by acting directly on the pre-Botzinger complex, a cluster of several thousand neurons in the ventrolateral medulla responsible for inspiration during respiratory activity. Contributes to the induction of sneezing following exposure to chemical irritants or allergens which causes release of NMB by nasal sensory neurons and activation of NMBR-expressing neurons in the sneeze-evoking region of the brainstem. These in turn activate neurons of the caudal ventral respiratory group, giving rise to the sneeze reflex. Contributes to induction of acute itch, possibly through activation of the NMBR receptor on dorsal root ganglion neurons. Increases expression of NMBR and steroidogenic mediators STAR, CYP11A1 and HSD3B1 in Leydig cells, induces secretion of testosterone by Leydig cells and also promotes Leydig cell proliferation. Plays a role in the innate immune response to influenza A virus infection by enhancing interferon alpha expression and reducing expression of IL6. Plays a role in CSF1-induced proliferation of osteoclast precursors by contributing to the positive regulation of the expression of the CSF1 receptor CSF1R. This Mus musculus (Mouse) protein is Neuromedin-B (Nmb).